A 540-amino-acid polypeptide reads, in one-letter code: Chaperonin GroEL 4 (540 aa).

ATP is bound by residues 29–32 (TLGP), 86–90 (DGTTT), Gly-413, 477–479 (NAA), and Asp-493.

Belongs to the chaperonin (HSP60) family. Forms a cylinder of 14 subunits composed of two heptameric rings stacked back-to-back. Interacts with the co-chaperonin GroES.

It is found in the cytoplasm. It carries out the reaction ATP + H2O + a folded polypeptide = ADP + phosphate + an unfolded polypeptide.. In terms of biological role, together with its co-chaperonin GroES, plays an essential role in assisting protein folding. The GroEL-GroES system forms a nano-cage that allows encapsulation of the non-native substrate proteins and provides a physical environment optimized to promote and accelerate protein folding. In Frankia alni (strain DSM 45986 / CECT 9034 / ACN14a), this protein is Chaperonin GroEL 4.